Here is a 225-residue protein sequence, read N- to C-terminus: Cytidylate kinase (225 aa).

11 to 19 (GPAGVGKST) provides a ligand contact to ATP.

This sequence belongs to the cytidylate kinase family. Type 1 subfamily.

The protein resides in the cytoplasm. The enzyme catalyses CMP + ATP = CDP + ADP. It catalyses the reaction dCMP + ATP = dCDP + ADP. The protein is Cytidylate kinase of Lawsonia intracellularis (strain PHE/MN1-00).